The chain runs to 210 residues: MIKQPALAQEQYACVYAWLALLFFREVDDEGLMQLQSAEIADWLALLKRQPALTASVAQLEQKIAALRQRQDAQLELAADFCGLFLMTDKKSALPYASQYLQKEPGMIKHLLLEAGMDVNDGFKEPTDHLAIYLELLSHLHFSLGESFQQRRMNKLRQKTLSSLLEWLPEFTNNCVKHDPYGFYAALSQLLLAIVRFDDGEEDFPIVAAG.

The protein belongs to the TorD/DmsD family. TorD subfamily.

The protein localises to the cytoplasm. In terms of biological role, involved in the biogenesis of TorA. Acts on TorA before the insertion of the molybdenum cofactor and, as a result, probably favors a conformation of the apoenzyme that is competent for acquiring the cofactor. This chain is Chaperone protein TorD, found in Salmonella arizonae (strain ATCC BAA-731 / CDC346-86 / RSK2980).